Here is a 122-residue protein sequence, read N- to C-terminus: Large ribosomal subunit protein uL14 (122 aa).

Belongs to the universal ribosomal protein uL14 family. In terms of assembly, part of the 50S ribosomal subunit. Forms a cluster with proteins L3 and L19. In the 70S ribosome, L14 and L19 interact and together make contacts with the 16S rRNA in bridges B5 and B8.

In terms of biological role, binds to 23S rRNA. Forms part of two intersubunit bridges in the 70S ribosome. The chain is Large ribosomal subunit protein uL14 from Clostridium botulinum (strain 657 / Type Ba4).